The sequence spans 127 residues: Unclassified hydrophobin 5 (127 aa).

The first 24 residues, 1–24 (MFNKQTNAIVLLFTFALFATLAVA), serve as a signal peptide directing secretion. 4 disulfide bridges follow: C39–C107, C46–C101, C47–C92, and C108–C121.

It belongs to the fungal hydrophobin family. In terms of assembly, self-assembles to form functional amyloid fibrils called rodlets. Self-assembly into fibrillar rodlets occurs spontaneously at hydrophobic:hydrophilic interfaces and the rodlets further associate laterally to form amphipathic monolayers.

Its subcellular location is the secreted. The protein resides in the cell wall. Functionally, aerial growth, conidiation, and dispersal of filamentous fungi in the environment rely upon a capability of their secreting small amphipathic proteins called hydrophobins (HPBs) with low sequence identity. Class I can self-assemble into an outermost layer of rodlet bundles on aerial cell surfaces, conferring cellular hydrophobicity that supports fungal growth, development and dispersal; whereas Class II form highly ordered films at water-air interfaces through intermolecular interactions but contribute nothing to the rodlet structure. In Pleurotus ostreatus (strain PC15) (Oyster mushroom), this protein is Unclassified hydrophobin 5.